A 461-amino-acid polypeptide reads, in one-letter code: MTTDNSAPTASPWWSLPGKFLRREFLPVLTDLRLAIALLLIIALFSISGTVIEQGQSPAFYQANYPEHPALFGFLTWKVIQVVGLDHVYRTWWFLSLLVLFGTSLTACTFTRQLPALKTAQRWKYYEEPRQFQKLALSAELDAGSVNSLSQILQNRRYKIFQEKDDILYARKGIVGRIGPIIVHIGIVTILLGSIWGAMTGFIAQEMVPSGETFQVKNIIDAGPLAAGQFPQDWSVRVNRFWIDYTPKGGIDQFYSDMSVLDNQGKEVDHKKIFVNQPLRYHGVTFYQTDWGISGVRVRLNKSPIFQLPMALLNTNGQGRIWGTWIPTKPDLSEGVSLLAKDLQGMVLIYDAQGKLVDTVRAGMSTQVNGVTLKVLDVVGSTGLQIKADPGIPIVYTGFGILMLGVVMSYFSHSQIWALQKGDRLYVGGKTNRAQVAFEQEVLEILERLSSQSATASNQQS.

3 consecutive transmembrane segments (helical) span residues 32-52 (LRLAIALLLIIALFSISGTVI), 91-111 (TWWFLSLLVLFGTSLTACTFT), and 178-198 (IGPIIVHIGIVTILLGSIWGA).

It belongs to the Ccs1/CcsB family. May interact with CcsA.

The protein resides in the cellular thylakoid membrane. In terms of biological role, required during biogenesis of c-type cytochromes (cytochrome c6 and cytochrome f) at the step of heme attachment. The sequence is that of Cytochrome c biogenesis protein CcsB from Trichormus variabilis (strain ATCC 29413 / PCC 7937) (Anabaena variabilis).